Consider the following 513-residue polypeptide: Maturase K (513 aa).

Belongs to the intron maturase 2 family. MatK subfamily.

It is found in the plastid. Its subcellular location is the chloroplast. Its function is as follows. Usually encoded in the trnK tRNA gene intron. Probably assists in splicing its own and other chloroplast group II introns. This chain is Maturase K, found in Panicum capillare (Witchgrass).